Consider the following 422-residue polypeptide: Synaptotagmin-2 (422 aa).

The segment at 1–43 (MRNIFKRNQEPNVAPATTTATMPLAPVAPADNSTESTGPGESQ) is disordered. Residues 1 to 60 (MRNIFKRNQEPNVAPATTTATMPLAPVAPADNSTESTGPGESQEDMFAKLKEKFFNEINK) lie on the Vesicular side of the membrane. Residues 14–30 (APATTTATMPLAPVAPA) are compositionally biased toward low complexity. The span at 31–40 (DNSTESTGPG) shows a compositional bias: polar residues. A glycan (N-linked (GlcNAc...) asparagine) is linked at Asn-32. A helical transmembrane segment spans residues 61-87 (IPLPPWALIAMAVVAGLLLLTCCFCIC). Residues 88–422 (KKCCCKKKKN…EVDALLGKNK (335 aa)) are Cytoplasmic-facing. The tract at residues 102 to 141 (GKGMKNAMNMKDMKGGQDDDDAETGLTEGEGEGEEEKEPE) is disordered. Residues 119–139 (DDDDAETGLTEGEGEGEEEKE) show a composition bias toward acidic residues. Thr-125 and Thr-128 each carry phosphothreonine. The interval 136-382 (EEKEPENLGK…AIGKIFVGSN (247 aa)) is phospholipid binding. 2 consecutive C2 domains span residues 142–261 (NLGK…EEWR) and 273–406 (KLGD…AQWH). Residues Leu-172, Asp-173, and Asp-179 each contribute to the Ca(2+) site. At Thr-202 the chain carries Phosphothreonine. Tyr-230 is modified (phosphotyrosine). Asp-231, Phe-232, Asp-233, Ser-236, Lys-237, Asp-239, Asp-304, Asp-310, Asp-364, and Asp-366 together coordinate Ca(2+). Thr-386 is modified (phosphothreonine).

The protein belongs to the synaptotagmin family. As to quaternary structure, homotetramer. Heterodimer; heterodimerizes with SYT1 in presence of calcium. Interacts with SCAMP5. Interacts with STON2. Interacts with PRRT2. In terms of assembly, (Microbial infection) Interacts with C.botulinum neurotoxin type B (BoNT/B, botB). (Microbial infection) Interacts with C.botulinum neurotoxin type G (BoNT/G, botG). Requires Ca(2+) as cofactor. Phosphorylation at Thr-202 by WNK1, changes the calcium requirement for SYT2-binding to phospholipid membranes.

It is found in the cytoplasmic vesicle. It localises to the secretory vesicle. The protein localises to the synaptic vesicle membrane. Its subcellular location is the chromaffin granule membrane. The protein resides in the cytoplasm. In terms of biological role, exhibits calcium-dependent phospholipid and inositol polyphosphate binding properties. May have a regulatory role in the membrane interactions during trafficking of synaptic vesicles at the active zone of the synapse. Plays a role in dendrite formation by melanocytes. Functionally, (Microbial infection) Receptor for C.botulinum neurotoxin type B (BoNT/B, botB); interaction is improved in the presence of gangliosides. The toxin binds via the vesicular domain (residues 47-60). Its function is as follows. (Microbial infection) Receptor for C.botulinum neurotoxin type G (BoNT/G, botG); gangliosides are not required for (or only very slightly improve) binding to a membrane-anchored receptor fragment. The toxin binds via the vesicular domain (residues 47-55). The chain is Synaptotagmin-2 from Mus musculus (Mouse).